Here is a 337-residue protein sequence, read N- to C-terminus: MSFFGFGPAAELDIALTDGESRRRVEHKTEDGKKEKYFLFYDGETVSGRVTVSLRNPGKRLEHQGLKIEFIGQIELYYDRGNHHEFVSLVKDLARPGELSQSQSFDFEFTHVEKPYESYTGQNVKLRYFLRATLSRRLNDVAKEMDIVVYTLSTYPELNSSIKMEVGIEDCLHIEFEYNKSKYHLKDVIVGKIYFLLVRIKIKHMEIDIIKRETTGTGPNVYHENDTIAKYEIMDGAPVRGESIPIRLFLAGYELTPTMRDINKKFSVRYYLNLVLIDEEERRYFKQQEIVLWRKGDIVRKSMSHQAAIASQRFEGTSHPETRPQHSGAAALEQEHE.

The segment at 313-337 (RFEGTSHPETRPQHSGAAALEQEHE) is disordered.

This sequence belongs to the VPS26 family. In terms of assembly, component of the heterotrimeric retromer cargo-selective complex (CSC) which is believed to associate with variable sorting nexins to form functionally distinct retromer complex variants.

It localises to the cytoplasm. It is found in the membrane. Its subcellular location is the endosome. In terms of biological role, acts as a component of the retromer cargo-selective complex (CSC). The CSC is believed to be the core functional component of retromer or respective retromer complex variants acting to prevent missorting of selected transmembrane cargo proteins into the lysosomal degradation pathway. Retromer mediates retrograde transport of cargo proteins from endosomes to the trans-Golgi network (TGN). In Xenopus laevis (African clawed frog), this protein is Vacuolar protein sorting-associated protein 26B-B (vps26b-b).